The chain runs to 178 residues: Large ribosomal subunit protein uL6 (178 aa).

Belongs to the universal ribosomal protein uL6 family. As to quaternary structure, part of the 50S ribosomal subunit.

Its function is as follows. This protein binds to the 23S rRNA, and is important in its secondary structure. It is located near the subunit interface in the base of the L7/L12 stalk, and near the tRNA binding site of the peptidyltransferase center. The chain is Large ribosomal subunit protein uL6 from Micrococcus luteus (Micrococcus lysodeikticus).